The sequence spans 228 residues: NAD(P)H-hydrate epimerase (228 aa).

Residues 9 to 214 (AQNIDQELFN…DLLLKKYELE (206 aa)) form the YjeF N-terminal domain. Residue 60-64 (NNGGD) coordinates (6S)-NADPHX. Asn-61 and Asp-125 together coordinate K(+). Residues 129 to 135 (GFSFKGE) and Asp-158 contribute to the (6S)-NADPHX site. Ser-161 lines the K(+) pocket.

Belongs to the NnrE/AIBP family. The cofactor is K(+).

It carries out the reaction (6R)-NADHX = (6S)-NADHX. It catalyses the reaction (6R)-NADPHX = (6S)-NADPHX. Catalyzes the epimerization of the S- and R-forms of NAD(P)HX, a damaged form of NAD(P)H that is a result of enzymatic or heat-dependent hydration. This is a prerequisite for the S-specific NAD(P)H-hydrate dehydratase to allow the repair of both epimers of NAD(P)HX. The chain is NAD(P)H-hydrate epimerase from Nematostella vectensis (Starlet sea anemone).